A 766-amino-acid chain; its full sequence is Ribonuclease Z, mitochondrial (766 aa).

The transit peptide at 1–25 (MYLVKSAGSPIYRTLRTLTTSNLMA) directs the protein to the mitochondrion.

This sequence belongs to the RNase Z family. In terms of assembly, homodimer. Zn(2+) is required as a cofactor.

The protein localises to the nucleus. It is found in the mitochondrion. It catalyses the reaction Endonucleolytic cleavage of RNA, removing extra 3' nucleotides from tRNA precursor, generating 3' termini of tRNAs. A 3'-hydroxy group is left at the tRNA terminus and a 5'-phosphoryl group is left at the trailer molecule.. Zinc phosphodiesterase, which displays some tRNA 3'-processing endonuclease activity of nuclear and mitochondrial pre-tRNA. Probably involved in tRNA maturation, by removing a 3'-trailer from precursor tRNA. May participate in tRNA processing in the developing embryo. The polypeptide is Ribonuclease Z, mitochondrial (Drosophila melanogaster (Fruit fly)).